The chain runs to 406 residues: Tryptophan synthase beta chain (406 aa).

Lys-99 bears the N6-(pyridoxal phosphate)lysine mark.

The protein belongs to the TrpB family. Tetramer of two alpha and two beta chains. Pyridoxal 5'-phosphate serves as cofactor.

The catalysed reaction is (1S,2R)-1-C-(indol-3-yl)glycerol 3-phosphate + L-serine = D-glyceraldehyde 3-phosphate + L-tryptophan + H2O. It functions in the pathway amino-acid biosynthesis; L-tryptophan biosynthesis; L-tryptophan from chorismate: step 5/5. Its function is as follows. The beta subunit is responsible for the synthesis of L-tryptophan from indole and L-serine. This chain is Tryptophan synthase beta chain, found in Rhizobium leguminosarum bv. trifolii (strain WSM2304).